A 179-amino-acid polypeptide reads, in one-letter code: Ribosome maturation factor RimM (179 aa).

The PRC barrel domain maps to 95–174 (KDEFFYFDIL…QIFCTQDAFL (80 aa)).

It belongs to the RimM family. In terms of assembly, binds ribosomal protein uS19.

The protein localises to the cytoplasm. In terms of biological role, an accessory protein needed during the final step in the assembly of 30S ribosomal subunit, possibly for assembly of the head region. Essential for efficient processing of 16S rRNA. May be needed both before and after RbfA during the maturation of 16S rRNA. It has affinity for free ribosomal 30S subunits but not for 70S ribosomes. This chain is Ribosome maturation factor RimM, found in Campylobacter jejuni subsp. doylei (strain ATCC BAA-1458 / RM4099 / 269.97).